The following is a 416-amino-acid chain: UDP-N-acetylmuramoylalanine--D-glutamate ligase (416 aa).

108–114 contributes to the ATP binding site; that stretch reads GTTGKTT.

The protein belongs to the MurCDEF family.

Its subcellular location is the cytoplasm. The enzyme catalyses UDP-N-acetyl-alpha-D-muramoyl-L-alanine + D-glutamate + ATP = UDP-N-acetyl-alpha-D-muramoyl-L-alanyl-D-glutamate + ADP + phosphate + H(+). It functions in the pathway cell wall biogenesis; peptidoglycan biosynthesis. Its function is as follows. Cell wall formation. Catalyzes the addition of glutamate to the nucleotide precursor UDP-N-acetylmuramoyl-L-alanine (UMA). The protein is UDP-N-acetylmuramoylalanine--D-glutamate ligase of Chlamydia trachomatis serovar A (strain ATCC VR-571B / DSM 19440 / HAR-13).